The following is a 133-amino-acid chain: Ribonuclease P protein component (133 aa).

Belongs to the RnpA family. As to quaternary structure, consists of a catalytic RNA component (M1 or rnpB) and a protein subunit.

The catalysed reaction is Endonucleolytic cleavage of RNA, removing 5'-extranucleotides from tRNA precursor.. In terms of biological role, RNaseP catalyzes the removal of the 5'-leader sequence from pre-tRNA to produce the mature 5'-terminus. It can also cleave other RNA substrates such as 4.5S RNA. The protein component plays an auxiliary but essential role in vivo by binding to the 5'-leader sequence and broadening the substrate specificity of the ribozyme. In Corynebacterium glutamicum (strain R), this protein is Ribonuclease P protein component.